Reading from the N-terminus, the 445-residue chain is Reticulon-4 receptor-like 1 (445 aa).

Positions 1-24 (MLRKGCCVELLLLLLAGELPLGGG) are cleaved as a signal peptide. Residues 25-54 (CPRDCVCYPAPMTVSCQAHNFAAIPEGIPE) enclose the LRRNT domain. 8 LRR repeats span residues 55 to 76 (DSER…HFSP), 77 to 98 (AMVT…TFEG), 101 to 123 (HLEE…TFQG), 126 to 147 (KLHA…IFGG), 150 to 171 (SLQY…IFVD), 174 to 195 (NLSH…IFRG), 198 to 219 (NLDR…AFHD), and 222 to 243 (RLTT…CLAP). Residues 255–306 (NAWDCGCRARSLWEWLRRFRGSSSAVPCATPELRQGQDLKLLRVEDFRNCTG) form the LRRCT domain. Disordered stretches follow at residues 307–377 (PVSP…SGKE) and 401–424 (RPKR…QQAS). 2 stretches are compositionally biased toward basic residues: residues 352 to 366 (GYKK…HRNR) and 401 to 413 (RPKR…RRTP). A lipid anchor (GPI-anchor amidated serine) is attached at Ser-424. The chain crosses the membrane as a helical span at residues 424–444 (SSGTALGAPLLAWILGLAVTL). Residues 425 to 445 (SGTALGAPLLAWILGLAVTLR) constitute a propeptide, removed in mature form.

The protein belongs to the Nogo receptor family. Identified in a complex that contains RTN4R, RTN4RL1 and NGFR; the interaction depends on the presence of chondroitin sulfate proteoglycans. Does not interact with MAG, OMG and RTN4. In terms of tissue distribution, detected in brain (at protein level). Detected in retina ganglion cell layer and inner nuclear layer.

It is found in the cell membrane. Its subcellular location is the membrane raft. The protein localises to the perikaryon. It localises to the cell projection. Cell surface receptor that plays a functionally redundant role in postnatal brain development and in regulating axon regeneration in the adult central nervous system. Contributes to normal axon migration across the brain midline and normal formation of the corpus callosum. Protects motoneurons against apoptosis; protection against apoptosis is probably mediated by MAG. Plays a role in inhibiting neurite outgrowth and axon regeneration via its binding to neuronal chondroitin sulfate proteoglycans. Binds heparin. Like other family members, plays a role in restricting the number dendritic spines and the number of synapses that are formed during brain development. Signaling mediates activation of Rho and downstream reorganization of the actin cytoskeleton. This chain is Reticulon-4 receptor-like 1, found in Mus musculus (Mouse).